The following is a 630-amino-acid chain: Amino acid transporter heavy chain SLC3A2 (630 aa).

The residue at position 1 (Met-1) is an N-acetylmethionine. Glu-2 is modified (N-acetylserine). Glu-2 carries the phosphoserine modification. The disordered stretch occupies residues 15-39 (IPRQLPGSHSEAGVQGLSAGDDSEL). The Cytoplasmic segment spans residues 102–184 (MSQDTEVDMK…SPGWVRTRWA (83 aa)). Residue Ser-103 is modified to Phosphoserine. The residue at position 106 (Thr-106) is a Phosphothreonine. Position 134 is a phosphoserine (Ser-134). Residue Lys-147 forms a Glycyl lysine isopeptide (Lys-Gly) (interchain with G-Cter in ubiquitin) linkage. Ser-165 carries the phosphoserine modification. A Glycyl lysine isopeptide (Lys-Gly) (interchain with G-Cter in SUMO2) cross-link involves residue Lys-166. The helical; Signal-anchor for type II membrane protein transmembrane segment at 185–205 (LLLLFWLGWLGMLAGAVVIIV) threads the bilayer. The Extracellular segment spans residues 206–630 (RAPRCRELPA…GLLLRFPYAA (425 aa)). N-linked (GlcNAc...) asparagine glycans are attached at residues Asn-365 and Asn-381. Phosphoserine is present on residues Ser-406, Ser-408, and Ser-410. Residue Asn-424 is glycosylated (N-linked (GlcNAc...) (complex) asparagine). Asn-506 carries N-linked (GlcNAc...) asparagine glycosylation. Residues Ser-527 and Ser-531 each carry the phosphoserine modification.

As to quaternary structure, disulfide-linked heterodimer with a non-glycosylated catalytic light subunit (SLC7A5, SLC7A6, SLC7A7, SLC7A8, SLC7A10 or SLC7A11). Interacts with TLCD3A/CT120. Interacts with ICAM1. Constitutively and specifically associates with beta-1 integrins (alpha-2/beta-1, alpha-3/beta-1, alpha-5/beta-1 and alpha-6/beta-1), but minimally with alpha-4/beta-1. Interacts with LAPTM4B; recruits SLC3A2 and SLC7A5/LAT1 to lysosomes to promote leucine uptake into these organelles and is required for mTORC1 activation. (Microbial infection) Interacts with hepatitis C virus/HCV envelope glycoprotein E2; the interaction may facilitate viral entry into host cell. Post-translationally, N-glycosylated; N-glycosylation is crucial for trafficking and stability of SLC3A2 to the plasma membrane. In terms of processing, phosphorylation on Ser-406; Ser-408 or Ser-410 and on Ser-527 or Ser-531 by ecto-protein kinases favors heterotypic cell-cell interactions. As to expression, expressed ubiquitously in all tissues tested with highest levels detected in kidney, placenta and testis and weakest level in thymus. During gestation, expression in the placenta was significantly stronger at full-term than at the mid-trimester stage. Expressed in HUVECS and at low levels in resting peripheral blood T-lymphocytes and quiescent fibroblasts. Also expressed in fetal liver and in the astrocytic process of primary astrocytic gliomas. Expressed in retinal endothelial cells and in the intestinal epithelial cell line C2BBe1.

Its subcellular location is the apical cell membrane. It localises to the cell membrane. The protein resides in the cell junction. The protein localises to the lysosome membrane. It is found in the melanosome. Its subcellular location is the basolateral cell membrane. Acts as a chaperone that facilitates biogenesis and trafficking of functional transporters heterodimers to the plasma membrane. Forms heterodimer with SLC7 family transporters (SLC7A5, SLC7A6, SLC7A7, SLC7A8, SLC7A10 and SLC7A11), a group of amino-acid antiporters. Heterodimers function as amino acids exchangers, the specificity of the substrate depending on the SLC7A subunit. Heterodimers SLC3A2/SLC7A6 or SLC3A2/SLC7A7 mediate the uptake of dibasic amino acids. Heterodimer SLC3A2/SLC7A11 functions as an antiporter by mediating the exchange of extracellular anionic L-cystine and intracellular L-glutamate across the cellular plasma membrane. SLC3A2/SLC7A10 translocates small neutral L- and D-amino acids across the plasma membrane. SLC3A2/SLC75 or SLC3A2/SLC7A8 translocates neutral amino acids with broad specificity, thyroid hormones and L-DOPA. SLC3A2 is essential for plasma membrane localization, stability, and the transport activity of SLC7A5 and SLC7A8. When associated with LAPTM4B, the heterodimer SLC7A5 is recruited to lysosomes to promote leucine uptake into these organelles, and thereby mediates mTORC1 activation. Modulates integrin-related signaling and is essential for integrin-dependent cell spreading, migration and tumor progression. In terms of biological role, (Microbial infection) In case of hepatitis C virus/HCV infection, the complex formed by SLC3A2 and SLC7A5/LAT1 plays a role in HCV propagation by facilitating viral entry into host cell and increasing L-leucine uptake-mediated mTORC1 signaling activation, thereby contributing to HCV-mediated pathogenesis. Functionally, (Microbial infection) Acts as a receptor for malaria parasite Plasmodium vivax (Thai isolate) in immature red blood cells. This chain is Amino acid transporter heavy chain SLC3A2, found in Homo sapiens (Human).